We begin with the raw amino-acid sequence, 530 residues long: Cation transporter HKT2;1 (530 aa).

At 1–40 (MTSIYHDFIHNKLQSFGRIGRYFVNFVVLAHRFIALHIHP) the chain is on the cytoplasmic side. A run of 2 helical transmembrane segments spans residues 41 to 61 (FWIQLSYFLLISILGSVLLMF) and 102 to 122 (IVVITLLMLLGGEVFVSFLGL). Topologically, residues 123 to 186 (MLRLNHKHNP…DLKRSKRLRW (64 aa)) are cytoplasmic. Helical transmembrane passes span 187–207 (FLGFVVFSYFVVIHVAGFLLV) and 260–280 (GLLLLFIGQILAGNTLYPLFL). Topologically, residues 281–317 (RLLIWFLGKVTKLRELKLMIKNPEELQYDYLLPKLPT) are cytoplasmic. 2 consecutive transmembrane segments (helical) span residues 318–338 (AFLASTVIGLMASLVTLFGAV) and 372–392 (IDCSLIAPAVLVLFIILMYLP). Residues 393–418 (PSTTFALSNGDEKTANKKAKRKLGLV) are Cytoplasmic-facing. Helical transmembrane passes span 419-439 (VQNLAFSQLACISVFVIVAFI) and 494-514 (SLSGWWSDEGKLLLVFVMLYG). The Cytoplasmic segment spans residues 515–530 (RLKAFTKGTGEYWRLW).

This sequence belongs to the TrkH potassium transport family. HKT (TC 2.A.38.3) subfamily. In terms of tissue distribution, expressed in epidermis and vascular tissue of endodermis in roots, and in cells surrounding the vasculature in leaves.

It is found in the membrane. The enzyme catalyses Na(+)(in) = Na(+)(out). Its function is as follows. Seems to be involved in regulation of potassium-sodium homeostasis. Seems to act as a high-affinity sodium transporter, which mediates increased sodium uptake in roots under potassium deficiency and contributes to sodium accumulation and salt toxicity. Involved in nutritional sodium uptake and distribution in potassium-starved roots to allow plant growth. May also act as a potassium transporter. Functions as a sodium-potassium cotransporter. The chain is Cation transporter HKT2;1 from Oryza sativa subsp. indica (Rice).